Here is a 241-residue protein sequence, read N- to C-terminus: MTALPAASITSSALDDLDALNAQLEGLRADERVAWALQHGPQDAALSSSFGAQSAVTLHLLSQQRPDIPVILIDTGYLFPETYRFADALTERLKLNLKVYRPLVSRAWMEARHGRLWEQGMVGIDQYNNLRKVEPMRRALDELNVGTWFTGLRRSQSGGRAQTPIVQKRGERYKISPIADWTDRDVWQYLQAHELPYHPLWEQGYVSIGDFHTTRRWEPGMREEDTRFFGLKRECGIHEDI.

Residue C235 is the Nucleophile; cysteine thiosulfonate intermediate of the active site.

The protein belongs to the PAPS reductase family. CysH subfamily.

Its subcellular location is the cytoplasm. It catalyses the reaction [thioredoxin]-disulfide + sulfite + adenosine 3',5'-bisphosphate + 2 H(+) = [thioredoxin]-dithiol + 3'-phosphoadenylyl sulfate. Its pathway is sulfur metabolism; hydrogen sulfide biosynthesis; sulfite from sulfate: step 3/3. In terms of biological role, catalyzes the formation of sulfite from phosphoadenosine 5'-phosphosulfate (PAPS) using thioredoxin as an electron donor. This Xanthomonas oryzae pv. oryzae (strain MAFF 311018) protein is Phosphoadenosine 5'-phosphosulfate reductase.